Reading from the N-terminus, the 498-residue chain is ATP synthase subunit beta, chloroplastic (498 aa).

172-179 (GGAGVGKT) contacts ATP.

This sequence belongs to the ATPase alpha/beta chains family. In terms of assembly, F-type ATPases have 2 components, CF(1) - the catalytic core - and CF(0) - the membrane proton channel. CF(1) has five subunits: alpha(3), beta(3), gamma(1), delta(1), epsilon(1). CF(0) has four main subunits: a(1), b(1), b'(1) and c(9-12).

It is found in the plastid. The protein localises to the chloroplast thylakoid membrane. It catalyses the reaction ATP + H2O + 4 H(+)(in) = ADP + phosphate + 5 H(+)(out). Its function is as follows. Produces ATP from ADP in the presence of a proton gradient across the membrane. The catalytic sites are hosted primarily by the beta subunits. This is ATP synthase subunit beta, chloroplastic from Phaseolus vulgaris (Kidney bean).